The sequence spans 193 residues: Putative kinase protein 029R (193 aa).

An ATP-binding site is contributed by 9 to 17 (GIIGSGKSS). 3 residues coordinate substrate: E31, Y43, and Q54. E78 acts as the Proton acceptor in catalysis. Residues R79 and E142 each coordinate substrate.

It belongs to the DCK/DGK family.

The chain is Putative kinase protein 029R from Aedes vexans (Inland floodwater mosquito).